A 350-amino-acid polypeptide reads, in one-letter code: Protein-glutamate methylesterase/protein-glutamine glutaminase (350 aa).

The Response regulatory domain maps to 5–122; it reads TVLCVDDSAL…REGMLAYSEL (118 aa). Residue aspartate 56 is modified to 4-aspartylphosphate. Residues 153–345 form the CheB-type methylesterase domain; it reads LLSSEKLIAV…KRMLAKISSG (193 aa). Residues serine 165, histidine 191, and aspartate 287 contribute to the active site.

Belongs to the CheB family. Post-translationally, phosphorylated by CheA. Phosphorylation of the N-terminal regulatory domain activates the methylesterase activity.

It localises to the cytoplasm. The enzyme catalyses [protein]-L-glutamate 5-O-methyl ester + H2O = L-glutamyl-[protein] + methanol + H(+). It carries out the reaction L-glutaminyl-[protein] + H2O = L-glutamyl-[protein] + NH4(+). Its function is as follows. Involved in chemotaxis. Part of a chemotaxis signal transduction system that modulates chemotaxis in response to various stimuli. Catalyzes the demethylation of specific methylglutamate residues introduced into the chemoreceptors (methyl-accepting chemotaxis proteins or MCP) by CheR. Also mediates the irreversible deamidation of specific glutamine residues to glutamic acid. The sequence is that of Protein-glutamate methylesterase/protein-glutamine glutaminase from Photorhabdus laumondii subsp. laumondii (strain DSM 15139 / CIP 105565 / TT01) (Photorhabdus luminescens subsp. laumondii).